Consider the following 1122-residue polypeptide: Cytosolic carboxypeptidase 4 (1122 aa).

Positions 287–338 (PGSTSSELPLNLTEEDFDDDGDEEMDKDSDVEAVKEDDDLETDLSKLSSKPG) are disordered. Residues 299-313 (TEEDFDDDGDEEMDK) show a composition bias toward acidic residues. Positions 731 to 1021 (YPYTYSTLMT…MYCLGLLILE (291 aa)) constitute a Peptidase M14 domain. Positions 803, 806, and 900 each coordinate Zn(2+). E985 acts as the Proton donor/acceptor in catalysis. Residues 1099–1122 (CALNKDEEEEEKEEGTGWRRRSVT) form a disordered region.

It belongs to the peptidase M14 family. In terms of assembly, interacts with MYLK. Interacts with TCF4. The cofactor is Zn(2+). Widely expressed at low level. Expressed in eye, muscle, pituitary, testis and to a lower extent in brain.

It is found in the cytoplasm. The protein localises to the cytosol. The catalysed reaction is (L-glutamyl)(n+1)-gamma-L-glutamyl-L-glutamyl-[protein] + H2O = (L-glutamyl)(n)-gamma-L-glutamyl-L-glutamyl-[protein] + L-glutamate. The enzyme catalyses C-terminal L-alpha-aminoacyl-L-glutamyl-L-glutamyl-[tubulin] + H2O = C-terminal L-alpha-aminoacyl-L-glutamyl-[tubulin] + L-glutamate. Metallocarboxypeptidase that mediates deglutamylation of tubulin and non-tubulin target proteins. Catalyzes the removal of polyglutamate side chains present on the gamma-carboxyl group of glutamate residues within the C-terminal tail of tubulin protein. Specifically cleaves tubulin long-side-chains, while it is not able to remove the branching point glutamate. Also catalyzes the removal of polyglutamate residues from the carboxy-terminus of non-tubulin proteins such as MYLK. The polypeptide is Cytosolic carboxypeptidase 4 (Mus musculus (Mouse)).